Consider the following 921-residue polypeptide: Sodium/calcium exchanger 2 (921 aa).

An N-terminal signal peptide occupies residues 1-20; sequence MAPLALMGVVLLLGVPHCLG. The interval 23–42 is disordered; the sequence is TPTPSLPPPTANDSDASPEG. Residues 69-89 traverse the membrane as a helical segment; it reads VARAVVYFVAMVYMFLGVSII. 2 N-linked (GlcNAc...) asparagine glycosylation sites follow: Asn125 and Asn130. Helical transmembrane passes span 131–151, 165–185, 197–217, and 226–246; these read LTLM…IEVC, IVGS…YVIP, VFFV…LILA, and VWEA…AWMA. The segment at 248–267 is putative calmodulin-binding region; sequence KRLLFYKYVYKRYRTDPRSG. Residues 371–391 are disordered; that stretch reads HAADAARRPGATDGAPDDEDD. Calx-beta domains follow at residues 389 to 482 and 512 to 611; these read EDDG…FVRL and ATVT…FIEL. Ca(2+)-binding residues include Glu407, Asp443, Asp468, Asp469, Ile471, Glu473, Glu476, Asp518, Asp519, Asp520, Glu536, Asp598, Glu599, and Glu600. Ser622 is subject to Phosphoserine. Residue Glu665 coordinates Ca(2+). A run of 6 helical transmembrane segments spans residues 721–741, 749–769, 786–806, 823–843, 855–875, and 893–913; these read CFDY…ACVP, WACF…IGDL, VVFV…VAAL, AVNV…YWAV, LAFS…VLLY, and LATT…SSLE.

Belongs to the Ca(2+):cation antiporter (CaCA) (TC 2.A.19) family. SLC8 subfamily. As to expression, detected in kidney cortex, in distal convoluted tubules and connecting segments. Detected in brain and spinal cord (at protein level). Detected in brain, especially in hippocampus CA1, CA2 and CA3 fiels, dentate gyrus, cerebellum and brain cortex.

The protein localises to the cell membrane. It localises to the basolateral cell membrane. The catalysed reaction is Ca(2+)(in) + 3 Na(+)(out) = Ca(2+)(out) + 3 Na(+)(in). With respect to regulation, calcium transport is down-regulated by Na(+) and stimulated by Ca(2+). Functionally, mediates the electrogenic exchange of Ca(2+) against Na(+) ions across the cell membrane, and thereby contributes to the regulation of cytoplasmic Ca(2+) levels and Ca(2+)-dependent cellular processes. Contributes to cellular Ca(2+) homeostasis in excitable cells. Contributes to the rapid decrease of cytoplasmic Ca(2+) levels back to baseline after neuronal activation, and thereby contributes to modulate synaptic plasticity, learning and memory. Plays a role in regulating urinary Ca(2+) and Na(+) excretion. In Mus musculus (Mouse), this protein is Sodium/calcium exchanger 2.